The sequence spans 299 residues: MPPECGGPPMPLDPLTLRPLAPSETATYLAPAKVNLGLSVRGLRTDGYHELHSVMVPLVVGDELEIAAADTLTLRVEGAALPTDERNLVYRAARAYLDAAGVSGGATITLRKRLPLASGLGGGSSDAATTLMALARLFPAPVNLPALALTLGADVPFFLLGQAALAQGIGDVLTPLPVPQVPLVLVNPGVEVSARDAYAWLDEEEAFTPPLDVEGLLAALTAQHELPTFNALQGPVAARHAPIQAALAALSSAGLRSPLMSGSGATCFALAASDAQAHAAAQALQAQHPAWWVVATRTL.

K33 is an active-site residue. 115–125 is a binding site for ATP; the sequence is PLASGLGGGSS. Residue D154 is part of the active site.

The protein belongs to the GHMP kinase family. IspE subfamily.

It carries out the reaction 4-CDP-2-C-methyl-D-erythritol + ATP = 4-CDP-2-C-methyl-D-erythritol 2-phosphate + ADP + H(+). The protein operates within isoprenoid biosynthesis; isopentenyl diphosphate biosynthesis via DXP pathway; isopentenyl diphosphate from 1-deoxy-D-xylulose 5-phosphate: step 3/6. Catalyzes the phosphorylation of the position 2 hydroxy group of 4-diphosphocytidyl-2C-methyl-D-erythritol. This is 4-diphosphocytidyl-2-C-methyl-D-erythritol kinase from Deinococcus geothermalis (strain DSM 11300 / CIP 105573 / AG-3a).